A 311-amino-acid polypeptide reads, in one-letter code: 4-hydroxy-tetrahydrodipicolinate synthase (311 aa).

Position 51 (threonine 51) interacts with pyruvate. Residue tyrosine 140 is the Proton donor/acceptor of the active site. Lysine 168 serves as the catalytic Schiff-base intermediate with substrate. Isoleucine 209 lines the pyruvate pocket.

The protein belongs to the DapA family. As to quaternary structure, homotetramer; dimer of dimers.

It is found in the cytoplasm. It carries out the reaction L-aspartate 4-semialdehyde + pyruvate = (2S,4S)-4-hydroxy-2,3,4,5-tetrahydrodipicolinate + H2O + H(+). It functions in the pathway amino-acid biosynthesis; L-lysine biosynthesis via DAP pathway; (S)-tetrahydrodipicolinate from L-aspartate: step 3/4. Its function is as follows. Catalyzes the condensation of (S)-aspartate-beta-semialdehyde [(S)-ASA] and pyruvate to 4-hydroxy-tetrahydrodipicolinate (HTPA). This is 4-hydroxy-tetrahydrodipicolinate synthase from Streptococcus pneumoniae (strain ATCC BAA-255 / R6).